We begin with the raw amino-acid sequence, 394 residues long: Ribulose bisphosphate carboxylase large chain (394 aa).

Lysine 5 carries the N6,N6,N6-trimethyllysine modification. Residues asparagine 114 and threonine 164 each contribute to the substrate site. Lysine 166 (proton acceptor) is an active-site residue. Lysine 168 lines the substrate pocket. 3 residues coordinate Mg(2+): lysine 192, aspartate 194, and glutamate 195. Lysine 192 bears the N6-carboxylysine mark. Histidine 285 (proton acceptor) is an active-site residue. The substrate site is built by arginine 286, histidine 318, and serine 370.

The protein belongs to the RuBisCO large chain family. Type I subfamily. Heterohexadecamer of 8 large chains and 8 small chains. The cofactor is Mg(2+).

Its subcellular location is the plastid. The protein localises to the chloroplast. The catalysed reaction is 2 (2R)-3-phosphoglycerate + 2 H(+) = D-ribulose 1,5-bisphosphate + CO2 + H2O. It catalyses the reaction D-ribulose 1,5-bisphosphate + O2 = 2-phosphoglycolate + (2R)-3-phosphoglycerate + 2 H(+). Functionally, ruBisCO catalyzes two reactions: the carboxylation of D-ribulose 1,5-bisphosphate, the primary event in carbon dioxide fixation, as well as the oxidative fragmentation of the pentose substrate in the photorespiration process. Both reactions occur simultaneously and in competition at the same active site. The sequence is that of Ribulose bisphosphate carboxylase large chain (rbcL) from Cabomba caroliniana (Carolina fanwort).